The sequence spans 307 residues: Mitochondrial thiamine pyrophosphate carrier 1 (307 aa).

Solcar repeat units follow at residues 13–95, 105–190, and 203–305; these read VSTT…IGSF, SPQL…IKIF, and PFTL…FMNK. Transmembrane regions (helical) follow at residues 19-36, 76-96, 108-126, 160-184, 210-226, and 280-297; these read LVAG…IAPL, IMYI…GSFL, LYSC…LASY, MGFF…FGVY, LAGP…TFPL, and GVTM…ISLW.

The protein belongs to the mitochondrial carrier (TC 2.A.29) family.

The protein resides in the mitochondrion inner membrane. In terms of biological role, mitochondrial transporter that mediates uptake of thiamine pyrophosphate (ThPP) into mitochondria. This is Mitochondrial thiamine pyrophosphate carrier 1 (TPC1) from Candida glabrata (strain ATCC 2001 / BCRC 20586 / JCM 3761 / NBRC 0622 / NRRL Y-65 / CBS 138) (Yeast).